The chain runs to 613 residues: DNA polymerase II small subunit (613 aa).

Belongs to the DNA polymerase delta/II small subunit family. Heterodimer of a large subunit and a small subunit.

It carries out the reaction DNA(n) + a 2'-deoxyribonucleoside 5'-triphosphate = DNA(n+1) + diphosphate. The enzyme catalyses Exonucleolytic cleavage in the 3'- to 5'-direction to yield nucleoside 5'-phosphates.. In terms of biological role, possesses two activities: a DNA synthesis (polymerase) and an exonucleolytic activity that degrades single-stranded DNA in the 3' to 5' direction. Has a template-primer preference which is characteristic of a replicative DNA polymerase. The polypeptide is DNA polymerase II small subunit (polB) (Pyrococcus furiosus (strain ATCC 43587 / DSM 3638 / JCM 8422 / Vc1)).